The chain runs to 100 residues: Large ribosomal subunit protein uL23 (100 aa).

It belongs to the universal ribosomal protein uL23 family. Part of the 50S ribosomal subunit. Contacts protein L29, and trigger factor when it is bound to the ribosome.

Its function is as follows. One of the early assembly proteins it binds 23S rRNA. One of the proteins that surrounds the polypeptide exit tunnel on the outside of the ribosome. Forms the main docking site for trigger factor binding to the ribosome. In Vibrio campbellii (strain ATCC BAA-1116), this protein is Large ribosomal subunit protein uL23.